Reading from the N-terminus, the 272-residue chain is Undecaprenyl-diphosphatase (272 aa).

8 helical membrane passes run 2–22, 50–70, 83–103, 110–130, 148–168, 195–215, 220–240, and 250–270; these read LELI…WLPI, VIQL…LFPF, FSLW…GVPF, LFYN…LFII, LGYK…IPGT, LAIP…GFAF, LIIL…AIKF, and FKAF…YFLA.

The protein belongs to the UppP family.

The protein resides in the cell membrane. The enzyme catalyses di-trans,octa-cis-undecaprenyl diphosphate + H2O = di-trans,octa-cis-undecaprenyl phosphate + phosphate + H(+). Catalyzes the dephosphorylation of undecaprenyl diphosphate (UPP). Confers resistance to bacitracin. This Acetivibrio thermocellus (strain ATCC 27405 / DSM 1237 / JCM 9322 / NBRC 103400 / NCIMB 10682 / NRRL B-4536 / VPI 7372) (Clostridium thermocellum) protein is Undecaprenyl-diphosphatase.